A 1066-amino-acid polypeptide reads, in one-letter code: Bifunctional cytochrome P450/NADPH--P450 reductase (1066 aa).

The segment at 1 to 480 is cytochrome P450; that stretch reads MAESVPIPEP…LAGNGATSSS (480 aa). Cys-407 provides a ligand contact to heme. Residues 481–1066 form an NADPH-P-450 reductase region; that stretch reads THNIKAAANL…NERFATDVFD (586 aa). One can recognise a Flavodoxin-like domain in the interval 500-641; sequence MAIFYGSNSG…DFEAWEDIVL (142 aa). FMN contacts are provided by residues 506-511, 554-557, Cys-588, and Thr-596; these read SNSGTC and SYEG. One can recognise an FAD-binding FR-type domain in the interval 676 to 904; that stretch reads QDVEEALVVA…RASSEAFHLP (229 aa).

This sequence in the N-terminal section; belongs to the cytochrome P450 family. The cofactor is FAD. Requires FMN as cofactor. It depends on heme as a cofactor.

It is found in the membrane. The catalysed reaction is an organic molecule + reduced [NADPH--hemoprotein reductase] + O2 = an alcohol + oxidized [NADPH--hemoprotein reductase] + H2O + H(+). It catalyses the reaction 2 oxidized [cytochrome P450] + NADPH = 2 reduced [cytochrome P450] + NADP(+) + H(+). Stimulated NADPH--cytochrome reductase activity in the presence of substrate. Inhibited by fatty acid substrates longer than 13 carbons and the degree of inhibition increases with increasing chain length. Its function is as follows. Functions as a fatty acid monooxygenase. Catalyzes hydroxylation of fatty acids at omega-1, omega-2 and omega-3 positions. Shows activity toward fatty acids with a chain length of 9-18 carbons with optimum chain lengths of 12-14 carbons (lauric, tridecylic and myristic acids). Can also use shorter saturated fatty acids with a chain length of 9 or 10 carbons as substrates. Also displays a NADPH-dependent reductase activity in the C-terminal domain, which allows electron transfer from NADPH to the heme iron of the cytochrome P450 N-terminal domain. In Fusarium oxysporum (Fusarium vascular wilt), this protein is Bifunctional cytochrome P450/NADPH--P450 reductase.